We begin with the raw amino-acid sequence, 608 residues long: Isocitrate dehydrogenase kinase/phosphatase (608 aa).

ATP is bound by residues 327–333 (APGIKGL) and K348. D383 is a catalytic residue. The tract at residues 589-608 (FDSTPDAGDGDSAGDAQRAA) is disordered.

The protein belongs to the AceK family.

It is found in the cytoplasm. It carries out the reaction L-seryl-[isocitrate dehydrogenase] + ATP = O-phospho-L-seryl-[isocitrate dehydrogenase] + ADP + H(+). Functionally, bifunctional enzyme which can phosphorylate or dephosphorylate isocitrate dehydrogenase (IDH) on a specific serine residue. This is a regulatory mechanism which enables bacteria to bypass the Krebs cycle via the glyoxylate shunt in response to the source of carbon. When bacteria are grown on glucose, IDH is fully active and unphosphorylated, but when grown on acetate or ethanol, the activity of IDH declines drastically concomitant with its phosphorylation. The chain is Isocitrate dehydrogenase kinase/phosphatase from Burkholderia ambifaria (strain MC40-6).